The primary structure comprises 176 residues: Late lactation protein (176 aa).

The signal sequence occupies residues 1-18 (MKVLFFTIALSLFSILHA). An intrachain disulfide couples Cys78 to Cys171.

It belongs to the calycin superfamily. Lipocalin family. As to expression, mammary gland. Secreted in milk.

Its subcellular location is the secreted. Probably serves a role in the transport of a small ligand released during the hydrolysis of milk fat. The chain is Late lactation protein from Trichosurus vulpecula (Brush-tailed possum).